Reading from the N-terminus, the 688-residue chain is Probable xyloglucan glycosyltransferase 7 (688 aa).

Positions 1–25 (MAPSWWGRSGGGGVGNGGGTPVVVK) are disordered. The span at 8–20 (RSGGGGVGNGGGT) shows a compositional bias: gly residues. 2 helical membrane passes run 121 to 141 (VSLV…LQGW) and 183 to 203 (VALF…CFWI). The active site involves Asp269. Substrate contacts are provided by Asp328 and Asp330. The active site involves Asp422. Helical transmembrane passes span 500–520 (LILP…TMFV) and 525–545 (LPAW…ILPA). Positions 604 to 635 (HSKQQRVGSAPNLDALTKEESNPKKDSKKKKH) are disordered. Residues 619–628 (LTKEESNPKK) show a composition bias toward basic and acidic residues. The next 2 helical transmembrane spans lie at 638–657 (IYRK…ARSL) and 663–683 (IHFY…LDLI).

The protein belongs to the glycosyltransferase 2 family. Plant cellulose synthase-like C subfamily.

It is found in the golgi apparatus membrane. Its function is as follows. Probable beta-1,4-glucan synthase rather involved in the synthesis of the xyloglucan backbone than cellulose. Seems to work simultaneously with xyloglucan 6-xylosyltransferase. Xyloglucan is a noncellulosic polysaccharides of plant cell wall and consists of a glucan backbone substituted by xylose, galactose and fucose. This Oryza sativa subsp. japonica (Rice) protein is Probable xyloglucan glycosyltransferase 7 (CSLC7).